A 942-amino-acid chain; its full sequence is Isoleucine--tRNA ligase (942 aa).

A 'HIGH' region motif is present at residues 58–68 (PYANGDIHIGH). E566 is an L-isoleucyl-5'-AMP binding site. The short motif at 607 to 611 (KMSKS) is the 'KMSKS' region element. K610 contributes to the ATP binding site. Zn(2+)-binding residues include C905, C908, C925, and C928.

Belongs to the class-I aminoacyl-tRNA synthetase family. IleS type 1 subfamily. As to quaternary structure, monomer. It depends on Zn(2+) as a cofactor.

The protein resides in the cytoplasm. The enzyme catalyses tRNA(Ile) + L-isoleucine + ATP = L-isoleucyl-tRNA(Ile) + AMP + diphosphate. Functionally, catalyzes the attachment of isoleucine to tRNA(Ile). As IleRS can inadvertently accommodate and process structurally similar amino acids such as valine, to avoid such errors it has two additional distinct tRNA(Ile)-dependent editing activities. One activity is designated as 'pretransfer' editing and involves the hydrolysis of activated Val-AMP. The other activity is designated 'posttransfer' editing and involves deacylation of mischarged Val-tRNA(Ile). This is Isoleucine--tRNA ligase from Vibrio parahaemolyticus serotype O3:K6 (strain RIMD 2210633).